The chain runs to 224 residues: 7-cyano-7-deazaguanine synthase (224 aa).

8 to 18 (LSGGMDSAAVI) provides a ligand contact to ATP. Positions 186, 196, 199, and 202 each coordinate Zn(2+).

It belongs to the QueC family. Zn(2+) serves as cofactor.

It carries out the reaction 7-carboxy-7-deazaguanine + NH4(+) + ATP = 7-cyano-7-deazaguanine + ADP + phosphate + H2O + H(+). Its pathway is purine metabolism; 7-cyano-7-deazaguanine biosynthesis. Its function is as follows. Catalyzes the ATP-dependent conversion of 7-carboxy-7-deazaguanine (CDG) to 7-cyano-7-deazaguanine (preQ(0)). The polypeptide is 7-cyano-7-deazaguanine synthase (Xanthomonas axonopodis pv. citri (strain 306)).